Reading from the N-terminus, the 182-residue chain is Inner membrane assembly complex subunit 17 (182 aa).

The N-terminal 45 residues, 1 to 45 (MLKRRSNALITLSRTKLFPITTVAYYHRRLLNQQRRAVSTSPKKE), are a transit peptide targeting the mitochondrion. Residues 46–107 (IKSLEDLANL…EIPVKRFIRP (62 aa)) are Mitochondrial matrix-facing. The helical transmembrane segment at 108–127 (LWMFILMGSSVYLLLHFSWW) threads the bilayer. Residues 128–158 (KLEHEERESQLKKEVEILEHQLNELIVQDKT) are a coiled coil. Topologically, residues 128–182 (KLEHEERESQLKKEVEILEHQLNELIVQDKTHNTSRGKGSNESTHMKPWYRRWFW) are mitochondrial intermembrane.

The protein belongs to the INA17 family. In terms of assembly, component of the inner membrane assembly (INA) complex, composed of INA17 and INA22. Interacts with a subset of F(1)F(0)-ATP synthase subunits of the F(1)-domain and the peripheral stalk.

It localises to the mitochondrion inner membrane. Its function is as follows. Component of the INA complex (INAC) that promotes the biogenesis of mitochondrial F(1)F(0)-ATP synthase. INAC facilitates the assembly of the peripheral stalk and promotes the assembly of the catalytic F(1)-domain with the membrane-embedded F(0)-domain. The polypeptide is Inner membrane assembly complex subunit 17 (Saccharomyces cerevisiae (strain RM11-1a) (Baker's yeast)).